The sequence spans 421 residues: Tyrosine--tRNA ligase 1 (421 aa).

Tyrosine 35 contacts L-tyrosine. Residues 40–49 carry the 'HIGH' region motif; the sequence is PTADSLHIGH. 2 residues coordinate L-tyrosine: tyrosine 170 and glutamine 174. Positions 231–235 match the 'KMSKS' region motif; sequence KFGKT. Lysine 234 is an ATP binding site. An S4 RNA-binding domain is found at 354 to 420; the sequence is LPLVEILVQS…GKKKYFLLTY (67 aa).

It belongs to the class-I aminoacyl-tRNA synthetase family. TyrS type 1 subfamily. Homodimer.

It is found in the cytoplasm. The enzyme catalyses tRNA(Tyr) + L-tyrosine + ATP = L-tyrosyl-tRNA(Tyr) + AMP + diphosphate + H(+). In terms of biological role, catalyzes the attachment of tyrosine to tRNA(Tyr) in a two-step reaction: tyrosine is first activated by ATP to form Tyr-AMP and then transferred to the acceptor end of tRNA(Tyr). The chain is Tyrosine--tRNA ligase 1 from Bacillus licheniformis (strain ATCC 14580 / DSM 13 / JCM 2505 / CCUG 7422 / NBRC 12200 / NCIMB 9375 / NCTC 10341 / NRRL NRS-1264 / Gibson 46).